A 63-amino-acid chain; its full sequence is uncharacterized protein (63 aa).

This is an uncharacterized protein from Rickettsia conorii (strain ATCC VR-613 / Malish 7).